Here is a 655-residue protein sequence, read N- to C-terminus: p-hydroxybenzoic acid efflux pump subunit AaeB (655 aa).

Transmembrane regions (helical) follow at residues 13-33 (FAVK…HFQL), 38-58 (WAVL…GGEP), 69-89 (LRII…ISMI), 93-113 (LLMI…SSLV), 121-141 (WGLS…EPLL), 152-172 (EIVI…PRSI), 370-390 (LFWL…IAVV), 407-427 (FIYG…VIIP), 431-451 (QSML…GIEV), 459-479 (MGAL…TFHF), and 482-502 (FLDS…VILL).

Belongs to the aromatic acid exporter ArAE (TC 2.A.85) family.

The protein localises to the cell inner membrane. Its function is as follows. Forms an efflux pump with AaeA. Could function as a metabolic relief valve, allowing to eliminate certain compounds when they accumulate to high levels in the cell. The sequence is that of p-hydroxybenzoic acid efflux pump subunit AaeB from Salmonella dublin (strain CT_02021853).